Here is a 785-residue protein sequence, read N- to C-terminus: DNA ligase (785 aa).

NAD(+) contacts are provided by residues 32 to 36, 81 to 82, and E121; these read DAEYD and SL. Catalysis depends on K123, which acts as the N6-AMP-lysine intermediate. NAD(+) contacts are provided by R144, E181, K297, and K321. Zn(2+) is bound by residues C415, C418, C445, and C451. One can recognise a BRCT domain in the interval 702-785; that stretch reads VEGLPLAGET…AFLKGHGISA (84 aa).

This sequence belongs to the NAD-dependent DNA ligase family. LigA subfamily. Mg(2+) serves as cofactor. It depends on Mn(2+) as a cofactor.

The enzyme catalyses NAD(+) + (deoxyribonucleotide)n-3'-hydroxyl + 5'-phospho-(deoxyribonucleotide)m = (deoxyribonucleotide)n+m + AMP + beta-nicotinamide D-nucleotide.. In terms of biological role, DNA ligase that catalyzes the formation of phosphodiester linkages between 5'-phosphoryl and 3'-hydroxyl groups in double-stranded DNA using NAD as a coenzyme and as the energy source for the reaction. It is essential for DNA replication and repair of damaged DNA. The chain is DNA ligase from Pseudomonas fluorescens (strain Pf0-1).